The sequence spans 482 residues: Catalase easC (482 aa).

Histidine 58 is a catalytic residue. Tyrosine 347 serves as a coordination point for heme.

The protein belongs to the catalase family. Heme serves as cofactor.

Its pathway is alkaloid biosynthesis; ergot alkaloid biosynthesis. Functionally, catalase; part of the gene cluster that mediates the biosynthesis of fungal ergot alkaloid. DmaW catalyzes the first step of ergot alkaloid biosynthesis by condensing dimethylallyl diphosphate (DMAP) and tryptophan to form 4-dimethylallyl-L-tryptophan. The second step is catalyzed by the methyltransferase easF that methylates 4-dimethylallyl-L-tryptophan in the presence of S-adenosyl-L-methionine, resulting in the formation of 4-dimethylallyl-L-abrine. The catalase easC and the FAD-dependent oxidoreductase easE then transform 4-dimethylallyl-L-abrine to chanoclavine-I which is further oxidized by easD in the presence of NAD(+), resulting in the formation of chanoclavine-I aldehyde. Chanoclavine-I aldehyde is the precursor of ergoamides and ergopeptines in Clavicipitaceae, and clavine-type alcaloids such as fumiclavine in Trichocomaceae. However, the metabolites downstream of chanoclavine-I aldehyde in Arthrodermataceae have not been identified yet. The polypeptide is Catalase easC (Arthroderma otae (strain ATCC MYA-4605 / CBS 113480) (Microsporum canis)).